Consider the following 195-residue polypeptide: N-(5'-phosphoribosyl)anthranilate isomerase (195 aa).

The protein belongs to the TrpF family.

The enzyme catalyses N-(5-phospho-beta-D-ribosyl)anthranilate = 1-(2-carboxyphenylamino)-1-deoxy-D-ribulose 5-phosphate. It functions in the pathway amino-acid biosynthesis; L-tryptophan biosynthesis; L-tryptophan from chorismate: step 3/5. The sequence is that of N-(5'-phosphoribosyl)anthranilate isomerase from Methanoregula boonei (strain DSM 21154 / JCM 14090 / 6A8).